The primary structure comprises 297 residues: MKHIIHASGNVNGTARNNSDCPHVALPEEIFFIISITGVLENLIIILAVIKNKNLQFPMYFFICSLAISDMLGSLYKILESILIMFRNMGYFKPHGSFETTTDDIIDTMFILSLLGSIFSLLAIAVDRYITIFHALQYHSIVTMHRTIAVLSIIWTFCIGSGITMVLFSHHVPTVLTFTSLFPLMLVFILCLYVHMFLMARSHARNISTLPRGNMRGAITLTILLGVFIFCWAPFILHILLVTFCPNNPYCTCYISLFHVNGMLIMCNAVIDPFIYAFRSPELRSAFRRMISYSKCL.

Over 1-23 (MKHIIHASGNVNGTARNNSDCPH) the chain is Extracellular. 2 N-linked (GlcNAc...) asparagine glycosylation sites follow: N12 and N17. Intrachain disulfides connect C21/C253 and C245/C251. A helical membrane pass occupies residues 24–49 (VALPEEIFFIISITGVLENLIIILAV). Residues 50–58 (IKNKNLQFP) lie on the Cytoplasmic side of the membrane. The helical transmembrane segment at 59–79 (MYFFICSLAISDMLGSLYKIL) threads the bilayer. The Extracellular segment spans residues 80-104 (ESILIMFRNMGYFKPHGSFETTTDD). Residues 105 to 126 (IIDTMFILSLLGSIFSLLAIAV) form a helical membrane-spanning segment. The Cytoplasmic portion of the chain corresponds to 127–147 (DRYITIFHALQYHSIVTMHRT). A helical membrane pass occupies residues 148 to 168 (IAVLSIIWTFCIGSGITMVLF). Over 169–180 (SHHVPTVLTFTS) the chain is Extracellular. The helical transmembrane segment at 181–199 (LFPLMLVFILCLYVHMFLM) threads the bilayer. Residues 200 to 217 (ARSHARNISTLPRGNMRG) are Cytoplasmic-facing. The helical transmembrane segment at 218-244 (AITLTILLGVFIFCWAPFILHILLVTF) threads the bilayer. Over 245–256 (CPNNPYCTCYIS) the chain is Extracellular. Residues 257–278 (LFHVNGMLIMCNAVIDPFIYAF) traverse the membrane as a helical segment. Residues 279–297 (RSPELRSAFRRMISYSKCL) are Cytoplasmic-facing. A lipid anchor (S-palmitoyl cysteine) is attached at C296.

The protein belongs to the G-protein coupled receptor 1 family. As to quaternary structure, homodimer. Interacts with corticotropin (ACTH). Interacts with MRAP; this interaction targets MC2R to the plasma membrane. Interacts with MRAP2; competing with MRAP for binding to MC2R and impairing the binding of corticotropin (ACTH). In terms of processing, ubiquitinated by MGRN1 that may be involved in post-endocytic trafficking and/or degradation of internalized receptor.

The protein resides in the cell membrane. Functionally, hormone receptor primarily expressed in adrenal cortex that plays a key role in regulating adrenocortical function. Upon corticotropin (ACTH) binding, facilitates the release of adrenal glucocorticoids, including cortisol and corticosterone. In addition, MC2R is required for fetal and neonatal adrenal gland development. Mechanistically, activates adenylate cyclase (cAMP), the MAPK cascade as well as the cAMP-dependent protein kinase A pathway leading to steroidogenic factor 1/NR5A1-mediated transcriptional activation. The sequence is that of Adrenocorticotropic hormone receptor (MC2R) from Cavia porcellus (Guinea pig).